The primary structure comprises 271 residues: Dipeptidyl-peptidase 6 (271 aa).

SH3b domains are found at residues 1 to 64 and 72 to 140; these read MNAI…LFDD and QKAQ…HPKI. A NlpC/P60 domain is found at 148–268; that stretch reads HAFRENVVQT…DLATTITAIG (121 aa). Cys-178 functions as the Nucleophile in the catalytic mechanism. His-224 (proton acceptor) is an active-site residue. Residue His-236 is part of the active site.

The protein belongs to the peptidase C40 family.

The protein localises to the cytoplasm. Its function is as follows. Involved in cell sporulation. Hydrolyzes gamma-D-Glu-L-(meso)A2pm linkages only in those peptide units that have a free N-terminal L-alanine. This Lysinibacillus sphaericus (Bacillus sphaericus) protein is Dipeptidyl-peptidase 6.